The chain runs to 91 residues: UPF0250 protein PSEEN4821 (91 aa).

It belongs to the UPF0250 family.

This chain is UPF0250 protein PSEEN4821, found in Pseudomonas entomophila (strain L48).